The chain runs to 400 residues: Glycine betaine/proline betaine transport system ATP-binding protein ProV (400 aa).

The 237-residue stretch at 29-265 (LSKEQILEKT…PANDYVRTFF (237 aa)) folds into the ABC transporter domain. 61-68 (GLSGSGKS) contributes to the ATP binding site. 2 CBS domains span residues 282–341 (RTPN…GLDA) and 343–400 (LIDA…VNNG).

It belongs to the ABC transporter superfamily. As to quaternary structure, the complex is composed of two ATP-binding proteins (ProV), two transmembrane proteins (ProW) and a solute-binding protein (ProX).

It is found in the cell inner membrane. In terms of biological role, part of the ProU ABC transporter complex involved in glycine betaine and proline betaine uptake. Probably responsible for energy coupling to the transport system. In Escherichia coli (strain K12), this protein is Glycine betaine/proline betaine transport system ATP-binding protein ProV.